Here is a 182-residue protein sequence, read N- to C-terminus: Large ribosomal subunit protein uL5 (182 aa).

The protein belongs to the universal ribosomal protein uL5 family. In terms of assembly, part of the 50S ribosomal subunit; part of the 5S rRNA/L5/L18/L25 subcomplex. Contacts the 5S rRNA and the P site tRNA. Forms a bridge to the 30S subunit in the 70S ribosome.

This is one of the proteins that bind and probably mediate the attachment of the 5S RNA into the large ribosomal subunit, where it forms part of the central protuberance. In the 70S ribosome it contacts protein S13 of the 30S subunit (bridge B1b), connecting the 2 subunits; this bridge is implicated in subunit movement. Contacts the P site tRNA; the 5S rRNA and some of its associated proteins might help stabilize positioning of ribosome-bound tRNAs. The polypeptide is Large ribosomal subunit protein uL5 (Acidobacterium capsulatum (strain ATCC 51196 / DSM 11244 / BCRC 80197 / JCM 7670 / NBRC 15755 / NCIMB 13165 / 161)).